Consider the following 202-residue polypeptide: Nucleoside triphosphate pyrophosphatase (202 aa).

Catalysis depends on aspartate 77, which acts as the Proton acceptor.

The protein belongs to the Maf family. A divalent metal cation serves as cofactor.

The protein resides in the cytoplasm. The catalysed reaction is a ribonucleoside 5'-triphosphate + H2O = a ribonucleoside 5'-phosphate + diphosphate + H(+). It catalyses the reaction a 2'-deoxyribonucleoside 5'-triphosphate + H2O = a 2'-deoxyribonucleoside 5'-phosphate + diphosphate + H(+). In terms of biological role, nucleoside triphosphate pyrophosphatase. May have a dual role in cell division arrest and in preventing the incorporation of modified nucleotides into cellular nucleic acids. This is Nucleoside triphosphate pyrophosphatase from Rickettsia canadensis (strain McKiel).